Here is a 592-residue protein sequence, read N- to C-terminus: Imidazole glycerol phosphate synthase hisHF, chloroplastic (592 aa).

Residues 1-55 (MEATAAPFSSIVSSRQNFSSSSSIRASSPASLFLSQKSIGNVNRKFKSPRSLSVR) constitute a chloroplast transit peptide. The 209-residue stretch at 63 to 271 (VVTLLDYGAG…LHPKLPATQK (209 aa)) folds into the Glutamine amidotransferase type-1 domain. Residues cysteine 141, histidine 246, and glutamate 248 each act as for GATase activity in the active site. The segment at 280–592 (LAKRVIACLD…LQEERIEVRI (313 aa)) is cyclase. Catalysis depends on residues aspartate 289 and aspartate 447.

This sequence in the C-terminal section; belongs to the HisA/HisF family.

The protein resides in the plastid. It is found in the chloroplast. It carries out the reaction 5-[(5-phospho-1-deoxy-D-ribulos-1-ylimino)methylamino]-1-(5-phospho-beta-D-ribosyl)imidazole-4-carboxamide + L-glutamine = D-erythro-1-(imidazol-4-yl)glycerol 3-phosphate + 5-amino-1-(5-phospho-beta-D-ribosyl)imidazole-4-carboxamide + L-glutamate + H(+). The catalysed reaction is L-glutamine + H2O = L-glutamate + NH4(+). It participates in amino-acid biosynthesis; L-histidine biosynthesis; L-histidine from 5-phospho-alpha-D-ribose 1-diphosphate: step 5/9. Functionally, IGPS catalyzes the conversion of PRFAR and glutamine to IGP, AICAR and glutamate. The glutaminase domain produces the ammonia necessary for the cyclase domain to produce IGP and AICAR from PRFAR. The ammonia is channeled to the active site of the cyclase domain. In Arabidopsis thaliana (Mouse-ear cress), this protein is Imidazole glycerol phosphate synthase hisHF, chloroplastic (HISN4).